The chain runs to 83 residues: Hepcidin (83 aa).

An N-terminal signal peptide occupies residues 1–23 (MALSTRTQAACLLLLLLASLSST). Residues 24–53 (TYLHQQMRQTTELQPLHGEESRADIAIPMQ) constitute a propeptide that is removed on maturation. 4 cysteine pairs are disulfide-bonded: cysteine 65-cysteine 81, cysteine 68-cysteine 71, cysteine 69-cysteine 77, and cysteine 72-cysteine 80.

The protein belongs to the hepcidin family. Interacts with SLC40A1; this interaction promotes SLC40A1 rapid ubiquitination. In terms of tissue distribution, highly expressed in the liver and to a much lesser extent in the heart. Secreted in blood.

It localises to the secreted. Functionally, liver-produced hormone that constitutes the main circulating regulator of iron absorption and distribution across tissues. Acts by promoting endocytosis and degradation of SLC40A1, leading to the retention of iron in iron-exporting cells and decreased flow of iron into plasma. Controls the major flows of iron into plasma: absorption of dietary iron in the intestine, recycling of iron by macrophages, which phagocytose old erythrocytes and other cells, and mobilization of stored iron from hepatocytes. The polypeptide is Hepcidin (Hamp) (Mus musculus (Mouse)).